The chain runs to 353 residues: Fe(3+) ions import ATP-binding protein FbpC 1 (353 aa).

An ABC transporter domain is found at 9–239 (VVFRNICKQF…PASAFIADFM (231 aa)). 41 to 48 (GPSGCGKT) lines the ATP pocket.

It belongs to the ABC transporter superfamily. Fe(3+) ion importer (TC 3.A.1.10) family. As to quaternary structure, the complex is composed of two ATP-binding proteins (FbpC), two transmembrane proteins (FbpB) and a solute-binding protein (FbpA).

It localises to the cell inner membrane. It carries out the reaction Fe(3+)(out) + ATP + H2O = Fe(3+)(in) + ADP + phosphate + H(+). Its function is as follows. Part of the ABC transporter complex FbpABC involved in Fe(3+) ions import. Responsible for energy coupling to the transport system. The protein is Fe(3+) ions import ATP-binding protein FbpC 1 of Rhizobium meliloti (strain 1021) (Ensifer meliloti).